Consider the following 175-residue polypeptide: MAAPVLRVSTPRWERIARVLVCLLGILLSLYAFHVEREHARDPSYKALCDVSSSISCSKVFGSRWGRGFGLLGSIFGNDSALNQPNSVYGIVFYAFQLLLGMTVSAMAALILMTTSIMSVVGSLYLGYILYFVLKDLCVICVTTYALNFILFVLNYKRLVYLNEAWKQKLQAKQD.

Over 1–12 (MAAPVLRVSTPR) the chain is Cytoplasmic. Residues 13-35 (WERIARVLVCLLGILLSLYAFHV) form a helical membrane-spanning segment. Residues 36–86 (EREHARDPSYKALCDVSSSISCSKVFGSRWGRGFGLLGSIFGNDSALNQPN) are Lumenal-facing. The cysteines at positions 49 and 57 are disulfide-linked. Asn86 lines the (S)-warfarin pocket. Residues 87–101 (SVYGIVFYAFQLLLG) traverse the membrane as a helical segment. Over 102 to 106 (MTVSA) the chain is Cytoplasmic. The helical transmembrane segment at 107–134 (MAALILMTTSIMSVVGSLYLGYILYFVL) threads the bilayer. Residues 135 to 137 (KDL) are Lumenal-facing. An intrachain disulfide couples Cys138 to Cys141. A helical membrane pass occupies residues 138-159 (CVICVTTYALNFILFVLNYKRL). Phylloquinone contacts are provided by Cys141 and Tyr145. Tyr145 provides a ligand contact to (S)-warfarin. The Cytoplasmic segment spans residues 160–175 (VYLNEAWKQKLQAKQD).

Belongs to the VKOR family.

Its subcellular location is the endoplasmic reticulum membrane. The enzyme catalyses phylloquinone + [protein]-disulfide + H2O = 2,3-epoxyphylloquinone + [protein]-dithiol. The catalysed reaction is phylloquinol + [protein]-disulfide = phylloquinone + [protein]-dithiol. Its activity is regulated as follows. Inhibited by warfarin (coumadin). Warfarin locks VKORC1 in both redox states into the closed conformation. Functionally, involved in vitamin K metabolism. Can reduce inactive vitamin K 2,3-epoxide to active vitamin K, and may contribute to vitamin K-mediated protection against oxidative stress. Plays a role in vitamin K-dependent gamma-carboxylation of Glu residues in target proteins. This Takifugu rubripes (Japanese pufferfish) protein is Vitamin K epoxide reductase complex subunit 1-like protein 1 (vkorc1l1).